A 459-amino-acid polypeptide reads, in one-letter code: Arginine biosynthesis bifunctional protein ArgJ, mitochondrial (459 aa).

Substrate contacts are provided by Thr187, Lys216, Thr227, Glu314, Asn454, and Thr459. Thr227 (nucleophile) is an active-site residue.

The protein belongs to the ArgJ family. In terms of assembly, heterodimer of an alpha and a beta chain. In terms of processing, the alpha and beta chains are autoproteolytically processed from a single precursor protein within the mitochondrion.

The protein resides in the mitochondrion matrix. The enzyme catalyses N(2)-acetyl-L-ornithine + L-glutamate = N-acetyl-L-glutamate + L-ornithine. It carries out the reaction L-glutamate + acetyl-CoA = N-acetyl-L-glutamate + CoA + H(+). Its pathway is amino-acid biosynthesis; L-arginine biosynthesis; L-ornithine and N-acetyl-L-glutamate from L-glutamate and N(2)-acetyl-L-ornithine (cyclic): step 1/1. It participates in amino-acid biosynthesis; L-arginine biosynthesis; N(2)-acetyl-L-ornithine from L-glutamate: step 1/4. In terms of biological role, catalyzes two activities which are involved in the cyclic version of arginine biosynthesis: the synthesis of acetylglutamate from glutamate and acetyl-CoA, and of ornithine by transacetylation between acetylornithine and glutamate. The protein is Arginine biosynthesis bifunctional protein ArgJ, mitochondrial of Uncinocarpus reesii (strain UAMH 1704).